A 267-amino-acid polypeptide reads, in one-letter code: Cyclin-C (267 aa).

The 104-residue stretch at 48–151 (IQVLGEQLKL…LLENLDCCLI (104 aa)) folds into the Cyclin N-terminal domain.

It belongs to the cyclin family. Cyclin C subfamily. As to quaternary structure, component of the Cdk8 module of the Mediator complex, composed of CycC, Cdk8, kto and skd.

It is found in the nucleus. In terms of biological role, component of the Mediator complex, a coactivator involved in regulated gene transcription of nearly all RNA polymerase II-dependent genes. Mediator functions as a bridge to convey information from gene-specific regulatory proteins to the basal RNA polymerase II transcription machinery. Mediator is recruited to promoters by direct interactions with regulatory proteins and serves as a scaffold for the assembly of a functional preinitiation complex with RNA polymerase II and the general transcription factors. Binds to and activates cyclin-dependent kinase Cdk8 that phosphorylates the CTD (C-terminal domain) of the large subunit of RNA polymerase II (RNAp II), which may inhibit the formation of a transcription initiation complex. Required for leg and eye development and macrochaete specification or differentiation. The sequence is that of Cyclin-C (CycC) from Drosophila melanogaster (Fruit fly).